The chain runs to 357 residues: Holliday junction branch migration complex subunit RuvB (357 aa).

Residues 1 to 27 (MGRFDDAGAQDAEPDDRDVSPALTVGE) form a disordered region. Residues 1–195 (MGRFDDAGAQ…FGFTAHMDFY (195 aa)) form a large ATPase domain (RuvB-L) region. Residues L34, R35, G76, K79, T80, S81, 142–144 (EDF), R185, Y195, and R232 contribute to the ATP site. Residue T80 participates in Mg(2+) binding. Positions 196 to 266 (EPAELERVLA…IAKAALEVYD (71 aa)) are small ATPAse domain (RuvB-S). The interval 269 to 357 (ELGLDRLDRA…TGLGQTGLFD (89 aa)) is head domain (RuvB-H). The DNA site is built by R324 and R329.

The protein belongs to the RuvB family. In terms of assembly, homohexamer. Forms an RuvA(8)-RuvB(12)-Holliday junction (HJ) complex. HJ DNA is sandwiched between 2 RuvA tetramers; dsDNA enters through RuvA and exits via RuvB. An RuvB hexamer assembles on each DNA strand where it exits the tetramer. Each RuvB hexamer is contacted by two RuvA subunits (via domain III) on 2 adjacent RuvB subunits; this complex drives branch migration. In the full resolvosome a probable DNA-RuvA(4)-RuvB(12)-RuvC(2) complex forms which resolves the HJ.

It is found in the cytoplasm. It catalyses the reaction ATP + H2O = ADP + phosphate + H(+). Its function is as follows. The RuvA-RuvB-RuvC complex processes Holliday junction (HJ) DNA during genetic recombination and DNA repair, while the RuvA-RuvB complex plays an important role in the rescue of blocked DNA replication forks via replication fork reversal (RFR). RuvA specifically binds to HJ cruciform DNA, conferring on it an open structure. The RuvB hexamer acts as an ATP-dependent pump, pulling dsDNA into and through the RuvAB complex. RuvB forms 2 homohexamers on either side of HJ DNA bound by 1 or 2 RuvA tetramers; 4 subunits per hexamer contact DNA at a time. Coordinated motions by a converter formed by DNA-disengaged RuvB subunits stimulates ATP hydrolysis and nucleotide exchange. Immobilization of the converter enables RuvB to convert the ATP-contained energy into a lever motion, pulling 2 nucleotides of DNA out of the RuvA tetramer per ATP hydrolyzed, thus driving DNA branch migration. The RuvB motors rotate together with the DNA substrate, which together with the progressing nucleotide cycle form the mechanistic basis for DNA recombination by continuous HJ branch migration. Branch migration allows RuvC to scan DNA until it finds its consensus sequence, where it cleaves and resolves cruciform DNA. This Mycobacterium sp. (strain JLS) protein is Holliday junction branch migration complex subunit RuvB.